Consider the following 203-residue polypeptide: Pyrrolidone-carboxylate peptidase (203 aa).

Active-site residues include Glu78, Cys141, and His165.

This sequence belongs to the peptidase C15 family. In terms of assembly, homotetramer.

It is found in the cytoplasm. The catalysed reaction is Release of an N-terminal pyroglutamyl group from a polypeptide, the second amino acid generally not being Pro.. In terms of biological role, removes 5-oxoproline from various penultimate amino acid residues except L-proline. This is Pyrrolidone-carboxylate peptidase from Thermoanaerobacter pseudethanolicus (strain ATCC 33223 / 39E) (Clostridium thermohydrosulfuricum).